Consider the following 562-residue polypeptide: Potassium-transporting ATPase potassium-binding subunit (562 aa).

10 consecutive transmembrane segments (helical) span residues 5 to 25, 63 to 83, 132 to 152, 175 to 195, 250 to 270, 279 to 299, 379 to 399, 416 to 436, 483 to 503, and 526 to 546; these read AFLL…PLGS, AAAI…LLMA, GLTV…FALI, LYVL…QGVL, LSNI…CFAF, QGHA…AVVM, GLYG…LMIG, MTAL…ALAL, VLLA…VLAI, and LFIG…FIPA.

The protein belongs to the KdpA family. As to quaternary structure, the system is composed of three essential subunits: KdpA, KdpB and KdpC.

It is found in the cell inner membrane. Part of the high-affinity ATP-driven potassium transport (or Kdp) system, which catalyzes the hydrolysis of ATP coupled with the electrogenic transport of potassium into the cytoplasm. This subunit binds the periplasmic potassium ions and delivers the ions to the membrane domain of KdpB through an intramembrane tunnel. In Pectobacterium atrosepticum (strain SCRI 1043 / ATCC BAA-672) (Erwinia carotovora subsp. atroseptica), this protein is Potassium-transporting ATPase potassium-binding subunit.